Reading from the N-terminus, the 64-residue chain is Large ribosomal subunit protein bL35 (64 aa).

The segment covering 1–42 (MPKAKTHSGASKRFRRTGTGKIVRQKANRRHLLEHKPTKRTR) has biased composition (basic residues). A disordered region spans residues 1–64 (MPKAKTHSGA…NSRINKLLNG (64 aa)). Residues 48–58 (TTVSAADNSRI) show a composition bias toward polar residues.

The protein belongs to the bacterial ribosomal protein bL35 family.

This is Large ribosomal subunit protein bL35 from Mycolicibacterium smegmatis (strain ATCC 700084 / mc(2)155) (Mycobacterium smegmatis).